Reading from the N-terminus, the 157-residue chain is Transcription factor HES-2 (157 aa).

Residues 13-70 (LRKSLKPLLEKRRRARINESLSQLKGLVLPLLGAETSRYSKLEKADILEMTVRFLREQ) form the bHLH domain. The region spanning 86 to 119 (YLEGYRACLARLARVLPACSVLEPAVSARLLEHL) is the Orange domain. The interval 124–157 (VSGGPPSLTPASASAPAPSPPVPPPSSLGLWRPW) is disordered. A compositionally biased stretch (low complexity) spans 125 to 139 (SGGPPSLTPASASAP). Over residues 140 to 149 (APSPPVPPPS) the composition is skewed to pro residues. Positions 154-157 (WRPW) match the WRPW motif motif.

Transcription repression requires formation of a complex with a corepressor protein of the Groucho/TLE family.

Its subcellular location is the nucleus. Transcriptional repressor of genes that require a bHLH protein for their transcription. The protein is Transcription factor HES-2 (Hes2) of Rattus norvegicus (Rat).